A 258-amino-acid chain; its full sequence is Spectinomycin 9-adenylyltransferase (258 aa).

It carries out the reaction spectinomycin + ATP = 9-O-adenylylspectinomycin + diphosphate. Functionally, mediates bacterial resistance to spectinomycin, is probably a spectinomycin 9-adenylyltransferase. The chain is Spectinomycin 9-adenylyltransferase from Campylobacter jejuni.